Reading from the N-terminus, the 58-residue chain is Potassium channel toxin Ts16 (58 aa).

The first 16 residues, 1-16 (MHSSVFILILFSLAVI), serve as a signal peptide directing secretion. 3 disulfide bridges follow: cysteine 29–cysteine 51, cysteine 34–cysteine 47, and cysteine 38–cysteine 53.

Expressed by the venom gland.

The protein resides in the secreted. Its function is as follows. Blocks potassium channels. This Tityus serrulatus (Brazilian scorpion) protein is Potassium channel toxin Ts16.